The sequence spans 322 residues: Transcription initiation factor IIB (322 aa).

2 consecutive repeat copies span residues 125–213 and 224–305.

Belongs to the TFIIB family.

In terms of biological role, stabilizes TBP binding to an archaeal box-A promoter. Also responsible for recruiting RNA polymerase II to the pre-initiation complex (DNA-TBP-TFIIB). This chain is Transcription initiation factor IIB, found in Aeropyrum pernix (strain ATCC 700893 / DSM 11879 / JCM 9820 / NBRC 100138 / K1).